The sequence spans 556 residues: Putative D-arabinono-1,4-lactone oxidase (556 aa).

In terms of domain architecture, FAD-binding PCMH-type spans 47 to 217 (FTSLPELYIQ…TEVTFKAVPA (171 aa)). H84 bears the Pros-8alpha-FAD histidine mark.

It belongs to the oxygen-dependent FAD-linked oxidoreductase family. FAD serves as cofactor.

The protein localises to the mitochondrion membrane. It catalyses the reaction D-arabinono-1,4-lactone + O2 = dehydro-D-arabinono-1,4-lactone + H2O2 + H(+). It functions in the pathway cofactor biosynthesis; D-erythroascorbate biosynthesis; dehydro-D-arabinono-1,4-lactone from D-arabinose: step 2/2. The chain is Putative D-arabinono-1,4-lactone oxidase (alo-1) from Neurospora crassa (strain ATCC 24698 / 74-OR23-1A / CBS 708.71 / DSM 1257 / FGSC 987).